We begin with the raw amino-acid sequence, 343 residues long: E3 ubiquitin-protein ligase RNF113A (343 aa).

At alanine 2 the chain carries N-acetylalanine. The segment at 2-60 (AEQLSPGKTTDQVCTFLFKKPGRKVAAGRRKRPICNQESGDSSSSSDEGNTVVRPEKKR) is important for interaction with SNRNP200/BRR2. Serine 6 is subject to Phosphoserine. The segment covering 23-34 (GRKVAAGRRKRP) has biased composition (basic residues). Residues 23–95 (GRKVAAGRRK…EEEEENKSES (73 aa)) are disordered. Positions 39–50 (ESGDSSSSSDEG) are enriched in low complexity. The important for interaction with CXCR4 stretch occupies residues 50-61 (GNTVVRPEKKRA). A phosphoserine mark is found at serine 84 and serine 85. A C3H1-type zinc finger spans residues 196–224 (DYQPDICKDYKETGFCGFGDSCKFLHDRS). Position 253 is a phosphoserine (serine 253). The RING-type zinc finger occupies 262-300 (CFICRQTFQNPVVTKCRHYFCESCALQHFRTTPRCYVCD). Residues 323–343 (AEGGGASGFPEDPDEDPVPIT) form a disordered region. Positions 333-343 (EDPDEDPVPIT) are enriched in acidic residues.

As to quaternary structure, component of pre-catalytic and catalytic spliceosome complexes. Interacts (via N-terminus) with the spliceosome subunit SNRNP200/BRR2. Component of the minor spliceosome. Within this complex, interacts with SCNM1 and CRIPT.

It is found in the nucleus. It localises to the nucleus speckle. It carries out the reaction S-ubiquitinyl-[E2 ubiquitin-conjugating enzyme]-L-cysteine + [acceptor protein]-L-lysine = [E2 ubiquitin-conjugating enzyme]-L-cysteine + N(6)-ubiquitinyl-[acceptor protein]-L-lysine.. The protein operates within protein modification; protein ubiquitination. Required for pre-mRNA splicing as component of the spliceosome. As a component of the minor spliceosome, involved in the splicing of U12-type introns in pre-mRNAs. E3 ubiquitin-protein ligase that catalyzes the transfer of ubiquitin onto target proteins. Catalyzes polyubiquitination of SNRNP200/BRR2 with non-canonical 'Lys-63'-linked polyubiquitin chains. Plays a role in DNA repair via its role in the synthesis of 'Lys-63'-linked polyubiquitin chains that recruit ALKBH3 and the ASCC complex to sites of DNA damage by alkylating agents. Ubiquitinates CXCR4, leading to its degradation, and thereby contributes to the termination of CXCR4 signaling. In Bos taurus (Bovine), this protein is E3 ubiquitin-protein ligase RNF113A (RNF113A).